The sequence spans 244 residues: rRNA adenine N-6-methyltransferase (244 aa).

Residues asparagine 11, isoleucine 13, glycine 38, glutamate 59, aspartate 84, and asparagine 101 each contribute to the S-adenosyl-L-methionine site.

The protein belongs to the class I-like SAM-binding methyltransferase superfamily. rRNA adenine N(6)-methyltransferase family.

It catalyses the reaction adenosine(2085) in 23S rRNA + 2 S-adenosyl-L-methionine = N(6)-dimethyladenosine(2085) in 23S rRNA + 2 S-adenosyl-L-homocysteine + 2 H(+). Functionally, this protein produces a dimethylation of the adenine residue at position 2085 in 23S rRNA, resulting in reduced affinity between ribosomes and macrolide-lincosamide-streptogramin B antibiotics. The protein is rRNA adenine N-6-methyltransferase (ermM) of Staphylococcus epidermidis.